The chain runs to 243 residues: UPF0246 protein SpyM51747 (243 aa).

It belongs to the UPF0246 family.

In Streptococcus pyogenes serotype M5 (strain Manfredo), this protein is UPF0246 protein SpyM51747.